The sequence spans 474 residues: Ribulose bisphosphate carboxylase large chain (474 aa).

Asn122 and Thr172 together coordinate substrate. Lys174 functions as the Proton acceptor in the catalytic mechanism. Residue Lys176 participates in substrate binding. Positions 200, 202, and 203 each coordinate Mg(2+). Lys200 is modified (N6-carboxylysine). The active-site Proton acceptor is His293. Substrate is bound by residues Arg294, His326, and Ser378.

It belongs to the RuBisCO large chain family. Type I subfamily. As to quaternary structure, heterohexadecamer of 8 large chains and 8 small chains; disulfide-linked. The disulfide link is formed within the large subunit homodimers. The cofactor is Mg(2+). Post-translationally, the disulfide bond which can form in the large chain dimeric partners within the hexadecamer appears to be associated with oxidative stress and protein turnover.

Its subcellular location is the carboxysome. It carries out the reaction 2 (2R)-3-phosphoglycerate + 2 H(+) = D-ribulose 1,5-bisphosphate + CO2 + H2O. It catalyses the reaction D-ribulose 1,5-bisphosphate + O2 = 2-phosphoglycolate + (2R)-3-phosphoglycerate + 2 H(+). Functionally, ruBisCO catalyzes two reactions: the carboxylation of D-ribulose 1,5-bisphosphate, the primary event in carbon dioxide fixation, as well as the oxidative fragmentation of the pentose substrate in the photorespiration process. Both reactions occur simultaneously and in competition at the same active site. In Gloeobacter violaceus (strain ATCC 29082 / PCC 7421), this protein is Ribulose bisphosphate carboxylase large chain.